Reading from the N-terminus, the 322-residue chain is Undecaprenyl-phosphate 4-deoxy-4-formamido-L-arabinose transferase (322 aa).

Residues 1–235 (MFEIHPVKKV…TCLTTTPLRM (235 aa)) lie on the Cytoplasmic side of the membrane. The helical transmembrane segment at 236–256 (LSLLGSIIAIGGFSIAVLLVI) threads the bilayer. The Periplasmic portion of the chain corresponds to 257-269 (LRLTFGPQWAAEG). Residues 270-290 (VFMLFAVLFTFIGAQFIGMGL) form a helical membrane-spanning segment. At 291–322 (LGEYIGRIYTDVRARPRYFVQQVIRPSSKENE) the chain is on the cytoplasmic side.

It belongs to the glycosyltransferase 2 family.

It localises to the cell inner membrane. The enzyme catalyses UDP-4-deoxy-4-formamido-beta-L-arabinose + di-trans,octa-cis-undecaprenyl phosphate = 4-deoxy-4-formamido-alpha-L-arabinopyranosyl di-trans,octa-cis-undecaprenyl phosphate + UDP. It functions in the pathway glycolipid biosynthesis; 4-amino-4-deoxy-alpha-L-arabinose undecaprenyl phosphate biosynthesis; 4-amino-4-deoxy-alpha-L-arabinose undecaprenyl phosphate from UDP-4-deoxy-4-formamido-beta-L-arabinose and undecaprenyl phosphate: step 1/2. It participates in bacterial outer membrane biogenesis; lipopolysaccharide biosynthesis. Its function is as follows. Catalyzes the transfer of 4-deoxy-4-formamido-L-arabinose from UDP to undecaprenyl phosphate. The modified arabinose is attached to lipid A and is required for resistance to polymyxin and cationic antimicrobial peptides. This Escherichia coli O157:H7 (strain EC4115 / EHEC) protein is Undecaprenyl-phosphate 4-deoxy-4-formamido-L-arabinose transferase.